A 1499-amino-acid polypeptide reads, in one-letter code: MIFSQGSSPFKGDFSKIKFSIASPESVLAHSRGEVLKPETINYRTFKPERDGLMCEKIFGPTKDWECYCGKYKRVRYKGIICDRCGVEVTMKSVRRERMGHISLAVPVVHTWFFRSVPSKIGALLDLSTKELERIIYYEVYVVINPGDPGEKQGIKKLDRLTEEQYFQIITEYEDNQDLDDDDPAKFVAKMGGEAIHTLLKGLNLDESAVGLRKVLKESGSEQKRADALKRLKVVEAFRKSYEPQKKTRKKPGGLFPEDEMPEPYIFEGNKPEYMVMEVIPVIPPELRPLVPLEGGRFATSDLNDLYRRVIIRNNRLKKLIDIRAPEVILRNEKRMLQEAVDALFDNSRKANAVKTGESNRPLKSLSDALKGKQGRFRQNLLGKRVDYSGRSVIVVGPELKLHECGLPKSMAIELFQPFVIRRLVERGIAKSVKSAKKLIDKKDPIVWDVLEKVIDGRPVLLNRAPTLHRLGIQAFQPTLIEGKAIQIHPLVCTAFNADFDGDQMAVHVPLSQEAQLEASLLMLSSHNLILPQSGKPVTVPSQDMVLGMYYLTKSRIGENGQGNIFYSNEEVLIAHNEERLGLHALVFIKYDGHVEQKFDPVRLLDIISDDESEKKAWLKKEIEAKRLLVTTVGRVIFNQYVPEKIGFVNKVIDKKGAKELISKICSEVGNVQAAEFLDNIKQVGYHYAMKGGLSIGLADAIIPEAKIQLIKKATKESNKILREYNRGTLTENERYNQIVDVWQKVTNLVAEESYQKLRKDRVGFNPLFMMLDSGARGSREQVRQLTGMRGLIARPQKSMSGQPGEIIENPIISNLKEGLTVLEYFVSTHGARKGLSDTSLKTADAGYLTRRLHDVAQDVIVTIDDCGTTRGLHVERSIEEETGGQIKFSDKIRGRVASRDIWDTLKDEIVVPAGGIITEDIADAIQANIGVLEADIRSVLTCEAKQGICSKCYGTNLAVHKIVEIGEAVGVIAAQSIGEPGTQLTLRTFHQGGTAQGGIAETETKAVYEGQVEFENIRTVEQETINEDGMPEVRILVIQKNGRINIVDPDSGKVLKRHDVPHGASLHRSVGDLVKKEDVLFSSEPNSTQIIAELEGYVKFADIEKGVTYKEEVDPQTGYVQHVIINWRSKLRASETREPRIMIVSESGEILKTYPVPIKSNLFVEDNKKVSIGDILAKVPRNLDRVGGDITAGLPKVTELFEARIPSDPAIVSEIDGYVGFGSQRRSSKEIKVKNEFGEEKTYYVQVGKHVLANEGDEVTAGEPLTDGAISPQDILRIQGPNAVQQYLVNEIQKVYQINAGVEISDKHLEVIVRQMLQKVRVEEPGDTELLPGDLIDRTVFIEANTAIAEKVRVIDKGDAPARIQEDQLYKLKEITKLNRELRKNSKSLIVVEPAIQATSHPVLLGITSAALQTESVISAASFQETTKVLTDAAVAGKIDNLLGLKENVIVGKLIPAGTGLKAYRKLELNKVYPEAAEIAVPEVDEAAPASSDDDAAE.

Residues Cys67, Cys69, Cys82, and Cys85 each contribute to the Zn(2+) site. Mg(2+)-binding residues include Asp499, Asp501, and Asp503. Residues Cys867, Cys943, Cys950, and Cys953 each contribute to the Zn(2+) site.

The protein belongs to the RNA polymerase beta' chain family. As to quaternary structure, the RNAP catalytic core consists of 2 alpha, 1 beta, 1 beta' and 1 omega subunit. When a sigma factor is associated with the core the holoenzyme is formed, which can initiate transcription. Requires Mg(2+) as cofactor. It depends on Zn(2+) as a cofactor.

It catalyses the reaction RNA(n) + a ribonucleoside 5'-triphosphate = RNA(n+1) + diphosphate. Its function is as follows. DNA-dependent RNA polymerase catalyzes the transcription of DNA into RNA using the four ribonucleoside triphosphates as substrates. This is DNA-directed RNA polymerase subunit beta' from Prosthecochloris aestuarii (strain DSM 271 / SK 413).